Consider the following 42-residue polypeptide: Phospholipase A1 (42 aa).

The protein belongs to the AB hydrolase superfamily. Lipase family. In terms of processing, contains six disulfide bonds. As to expression, expressed by the venom gland.

It is found in the secreted. It carries out the reaction a 1,2-diacyl-sn-glycero-3-phosphocholine + H2O = a 2-acyl-sn-glycero-3-phosphocholine + a fatty acid + H(+). Its function is as follows. Catalyzes the hydrolysis of phosphatidylcholine with phospholipase A1 activity. May act as an allergen and induce hemolytic activity. The sequence is that of Phospholipase A1 from Polistes gallicus (Paper wasp).